The chain runs to 422 residues: Testin (422 aa).

Residues 92-199 (MILTNPVPAK…GDVKLPGELE (108 aa)) form the PET domain. Positions 198 to 224 (LETKATDKNNVNSGDRSTSAAVGAMED) are disordered. Polar residues predominate over residues 205–217 (KNNVNSGDRSTSA). LIM zinc-binding domains lie at 234-297 (YSCY…CDSE), 299-359 (PRCA…KHAA), and 362-422 (QGCH…KMMS).

Belongs to the prickle / espinas / testin family.

It localises to the cytoplasm. Its subcellular location is the cell junction. The protein localises to the focal adhesion. In terms of biological role, scaffold protein that may play a role in cell adhesion, cell spreading and in the reorganization of the actin cytoskeleton. May play a role in the regulation of cell proliferation. May inhibit cell growth. This chain is Testin (TES), found in Gallus gallus (Chicken).